Consider the following 340-residue polypeptide: Quinic acid degradation cluster protein x (340 aa).

The Mg(2+) site is built by Glu90, Asp115, Leu117, Asp118, and Asp262. Glu90 is a binding site for substrate. Substrate contacts are provided by residues 117-120 (LDGT) and Asp262.

It belongs to the inositol monophosphatase superfamily.

Functionally, part of the qa gene cluster that mediates the catabolism of quinic acid (QA) and as such, allows the use of QA as a sole carbon source. Its function within the pathway has not been determined yet but it probably plays a regulatory role. The qa cluster encodes 3 inducible enymes (qa-2, qa-3 and qa-4) catalyzing the first three reactions in the catabolism of quinic acid to protocatechuic acid (also known as 3,4-Dihydroxybenzoic acid). The protein is Quinic acid degradation cluster protein x of Neurospora crassa (strain ATCC 24698 / 74-OR23-1A / CBS 708.71 / DSM 1257 / FGSC 987).